The primary structure comprises 57 residues: Phospholipase A2 superbin b (57 aa).

Residues Tyr-28, Gly-30, and Gly-32 each coordinate Ca(2+). An intrachain disulfide couples Cys-29 to Cys-45. His-48 is an active-site residue. Asp-49 provides a ligand contact to Ca(2+).

Requires Ca(2+) as cofactor. Expressed by the venom gland.

Its subcellular location is the secreted. The enzyme catalyses a 1,2-diacyl-sn-glycero-3-phosphocholine + H2O = a 1-acyl-sn-glycero-3-phosphocholine + a fatty acid + H(+). Its function is as follows. Snake venom phospholipase A2 (PLA2) that inhibits collagen-induced platelet aggregation. In terms of inhibition of platelet aggregation, superbin b is more potent as superbin c, and d. PLA2 catalyzes the calcium-dependent hydrolysis of the 2-acyl groups in 3-sn-phosphoglycerides. This chain is Phospholipase A2 superbin b, found in Austrelaps superbus (Lowland copperhead snake).